Here is a 128-residue protein sequence, read N- to C-terminus: Iron-sulfur cluster insertion protein ErpA (128 aa).

Positions 56, 120, and 122 each coordinate iron-sulfur cluster.

This sequence belongs to the HesB/IscA family. Homodimer. Iron-sulfur cluster serves as cofactor.

Required for insertion of 4Fe-4S clusters for at least IspG. This Xylella fastidiosa (strain M23) protein is Iron-sulfur cluster insertion protein ErpA.